Here is a 116-residue protein sequence, read N- to C-terminus: U30-theraphotoxin-Cg1b (116 aa).

Positions 1–17 are cleaved as a signal peptide; the sequence is MKLCVLTIATLLVTATS. A propeptide spanning residues 18-53 is cleaved from the precursor; the sequence is LETQKEIAEGNELTREETPSLVEHKEDEAAAASEKR. Residues 25 to 45 are disordered; the sequence is AEGNELTREETPSLVEHKEDE. Intrachain disulfides connect cysteine 55-cysteine 69, cysteine 62-cysteine 75, cysteine 66-cysteine 112, and cysteine 68-cysteine 88.

The protein belongs to the neurotoxin 03 (Tx2) family. 02 subfamily. Expressed by the venom gland.

It localises to the secreted. Functionally, probable ion channel inhibitor. This is U30-theraphotoxin-Cg1b from Chilobrachys guangxiensis (Chinese earth tiger tarantula).